Here is a 151-residue protein sequence, read N- to C-terminus: Small ribosomal subunit protein uS15 (151 aa).

The protein belongs to the universal ribosomal protein uS15 family.

This chain is Small ribosomal subunit protein uS15 (RPS13), found in Ciona intestinalis (Transparent sea squirt).